Here is a 243-residue protein sequence, read N- to C-terminus: Probable 6-oxopurine nucleoside phosphorylase (243 aa).

Phosphate-binding positions include T8 and R48–H49. M174 is a binding site for substrate. T175 contacts phosphate. N198 to A200 lines the substrate pocket.

It belongs to the PNP/MTAP phosphorylase family. MTAP subfamily. In terms of assembly, homohexamer. Dimer of a homotrimer.

It carries out the reaction a purine D-ribonucleoside + phosphate = a purine nucleobase + alpha-D-ribose 1-phosphate. Its pathway is purine metabolism; purine nucleoside salvage. In terms of biological role, purine nucleoside phosphorylase which is highly specific for 6-oxopurine nucleosides. Cleaves guanosine or inosine to respective bases and sugar-1-phosphate molecules. Involved in purine salvage. The polypeptide is Probable 6-oxopurine nucleoside phosphorylase (Archaeoglobus fulgidus (strain ATCC 49558 / DSM 4304 / JCM 9628 / NBRC 100126 / VC-16)).